Reading from the N-terminus, the 261-residue chain is Ribonuclease PH (261 aa).

Phosphate is bound by residues Arg87 and 125 to 127 (GTR).

The protein belongs to the RNase PH family. In terms of assembly, homohexameric ring arranged as a trimer of dimers.

The enzyme catalyses tRNA(n+1) + phosphate = tRNA(n) + a ribonucleoside 5'-diphosphate. In terms of biological role, phosphorolytic 3'-5' exoribonuclease that plays an important role in tRNA 3'-end maturation. Removes nucleotide residues following the 3'-CCA terminus of tRNAs; can also add nucleotides to the ends of RNA molecules by using nucleoside diphosphates as substrates, but this may not be physiologically important. Probably plays a role in initiation of 16S rRNA degradation (leading to ribosome degradation) during starvation. This is Ribonuclease PH from Thermoanaerobacter pseudethanolicus (strain ATCC 33223 / 39E) (Clostridium thermohydrosulfuricum).